A 584-amino-acid polypeptide reads, in one-letter code: A-type ATP synthase subunit A (584 aa).

233–240 is a binding site for ATP; the sequence is GPFGSGKT.

The protein belongs to the ATPase alpha/beta chains family. Has multiple subunits with at least A(3), B(3), C, D, E, F, H, I and proteolipid K(x).

Its subcellular location is the cell membrane. The enzyme catalyses ATP + H2O + 4 H(+)(in) = ADP + phosphate + 5 H(+)(out). Component of the A-type ATP synthase that produces ATP from ADP in the presence of a proton gradient across the membrane. The A chain is the catalytic subunit. The polypeptide is A-type ATP synthase subunit A (Methanothermobacter thermautotrophicus (strain ATCC 29096 / DSM 1053 / JCM 10044 / NBRC 100330 / Delta H) (Methanobacterium thermoautotrophicum)).